The chain runs to 385 residues: Ribosomal RNA large subunit methyltransferase G (385 aa).

This sequence belongs to the methyltransferase superfamily. RlmG family.

The protein localises to the cytoplasm. The enzyme catalyses guanosine(1835) in 23S rRNA + S-adenosyl-L-methionine = N(2)-methylguanosine(1835) in 23S rRNA + S-adenosyl-L-homocysteine + H(+). Functionally, specifically methylates the guanine in position 1835 (m2G1835) of 23S rRNA. In Vibrio parahaemolyticus serotype O3:K6 (strain RIMD 2210633), this protein is Ribosomal RNA large subunit methyltransferase G.